The following is a 96-amino-acid chain: Co-chaperonin GroES (96 aa).

Belongs to the GroES chaperonin family. In terms of assembly, heptamer of 7 subunits arranged in a ring. Interacts with the chaperonin GroEL.

The protein localises to the cytoplasm. In terms of biological role, together with the chaperonin GroEL, plays an essential role in assisting protein folding. The GroEL-GroES system forms a nano-cage that allows encapsulation of the non-native substrate proteins and provides a physical environment optimized to promote and accelerate protein folding. GroES binds to the apical surface of the GroEL ring, thereby capping the opening of the GroEL channel. This is Co-chaperonin GroES from Wolbachia sp. subsp. Drosophila simulans (strain wRi).